A 242-amino-acid chain; its full sequence is MNVDKQRQEAQPAFVLHSYPYLETSLIVEVFTQNSGRIAVVAKGAKRPTSPLRGLLRAFQPLLLSWGGKSELRTLHKAEWQGGQLPLQGTALICGFYLNELLIRLLHRNDPHERLFACYQEALSDLSTASDYIPILRRFEQRLLQEMGYALTLDHDVSSGKPIKPTQMYCYEIERGPIASSNGSCPFNLELSGKTLLDMYQGDYLAPLTRLQSRILMRHLLSHYLGDKPLHTRQLLKEFQQL.

The protein belongs to the RecO family.

Functionally, involved in DNA repair and RecF pathway recombination. In Nitrosospira multiformis (strain ATCC 25196 / NCIMB 11849 / C 71), this protein is DNA repair protein RecO.